The sequence spans 177 residues: Ubiquinol-cytochrome c reductase iron-sulfur subunit (177 aa).

The chain crosses the membrane as a helical span at residues 18-38 (IVLTASSVAAVGAACAFWPII). The 88-residue stretch at 88–175 (ARAVKMSELI…YIFISDKKIR (88 aa)) folds into the Rieske domain. Residues C120, H122, C139, and H142 each contribute to the [2Fe-2S] cluster site. Cysteines 125 and 141 form a disulfide.

This sequence belongs to the Rieske iron-sulfur protein family. The main subunits of complex b-c1 are: cytochrome b, cytochrome c1 and the Rieske protein. Requires [2Fe-2S] cluster as cofactor.

It localises to the cell membrane. It carries out the reaction a quinol + 2 Fe(III)-[cytochrome c](out) = a quinone + 2 Fe(II)-[cytochrome c](out) + 2 H(+)(out). In terms of biological role, component of the ubiquinol-cytochrome c reductase complex (complex III or cytochrome b-c1 complex), which is a respiratory chain that generates an electrochemical potential coupled to ATP synthesis. This is Ubiquinol-cytochrome c reductase iron-sulfur subunit (petA) from Rickettsia prowazekii (strain Madrid E).